The primary structure comprises 122 residues: ATP synthase epsilon chain (122 aa).

The protein belongs to the ATPase epsilon chain family. F-type ATPases have 2 components, CF(1) - the catalytic core - and CF(0) - the membrane proton channel. CF(1) has five subunits: alpha(3), beta(3), gamma(1), delta(1), epsilon(1). CF(0) has three main subunits: a, b and c.

Its subcellular location is the cell membrane. Functionally, produces ATP from ADP in the presence of a proton gradient across the membrane. This is ATP synthase epsilon chain from Rhodococcus jostii (strain RHA1).